The primary structure comprises 212 residues: Tubulin alpha chain (212 aa).

GTP-binding residues include Asn-3 and Asn-25. Residue Glu-51 is part of the active site.

The protein belongs to the tubulin family. As to quaternary structure, dimer of alpha and beta chains. A typical microtubule is a hollow water-filled tube with an outer diameter of 25 nm and an inner diameter of 15 nM. Alpha-beta heterodimers associate head-to-tail to form protofilaments running lengthwise along the microtubule wall with the beta-tubulin subunit facing the microtubule plus end conferring a structural polarity. Microtubules usually have 13 protofilaments but different protofilament numbers can be found in some organisms and specialized cells. Requires Mg(2+) as cofactor.

It localises to the cytoplasm. Its subcellular location is the cytoskeleton. The catalysed reaction is GTP + H2O = GDP + phosphate + H(+). Tubulin is the major constituent of microtubules, a cylinder consisting of laterally associated linear protofilaments composed of alpha- and beta-tubulin heterodimers. Microtubules grow by the addition of GTP-tubulin dimers to the microtubule end, where a stabilizing cap forms. Below the cap, tubulin dimers are in GDP-bound state, owing to GTPase activity of alpha-tubulin. The protein is Tubulin alpha chain (TUB-A) of Pneumocystis carinii.